Consider the following 396-residue polypeptide: AVNPTGCDAVEPVAVRALDLINKGRDGYLFQLLRVADAHLDKVESIAVYYLVESDCPVLSRKHWDDCELNVTVIGQCKLAGPEDLSVNDFNCTTSSVSSALTNMRARGGEGTSYFLDFSVRNCSSHHFPRHHIFGFCRADLFYDVEASDLETPKDIVTNCEVFHRRFSAVQHHLGRPFHSGEHEHSPAGRPPFKPSGSKDHGHPHESYNFRCPPPLEHKNHSDSPPFQARAPLPFPPPGLRCPHPPFGTKGNHRPPHDHSSDEHHPHGHHPHGHHPHGHHPHGHHPPDNDFYDHGPCDPPPHRPPPRHSKERGPGKGHFRFHWRPTGYIHRLPSLKKGEVLPLPEANFPSFSLPNHNNPLQPEIQAFPQSASESCPGTFNIKFLHISKFFAYTLPK.

Cystatin domains are found at residues A1–T102 and N103–A169. 6 disulfides stabilise this stretch: C7/C375, C56/C67, C77/C92, C123/C297, C137/C160, and C212/C242. N70 carries an N-linked (GlcNAc...) asparagine; partial glycan. N91 and N122 each carry an N-linked (GlcNAc...) asparagine glycan. A disordered region spans residues R176–H322. The span at G197–Y208 shows a compositional bias: basic and acidic residues. N-linked (GlcNAc...) asparagine glycosylation occurs at N220. Positions L233–P246 are enriched in pro residues. A compositionally biased stretch (basic and acidic residues) spans P255–H265. A compositionally biased stretch (basic residues) spans P266 to H284. The segment covering H285–P296 has biased composition (basic and acidic residues). The span at P304–H322 shows a compositional bias: basic residues. Position 309 is a phosphoserine (S309).

As to quaternary structure, interacts (via the HRR domain) with TPM1; the interaction appears to contribute to the antiangiogenic properties of the HRR domain. Interacts with THBS1 (via the TSP type I repeats); the interaction blocks the antiangiogenic effect of THBS1 with CD36. Interacts with PLG (via its Kringle domains); the interaction tethers PLG to the cell surface and enhances its activation. Interacts with THBS2; the interaction blocks the antiangiogenic effect of THBS2 with CD36. Interacts with HPSE; the interaction is enhanced at acidic pH, partially inhibits binding of HPSE to cell surface receptors and modulates its enzymatic activity. Interacts (via the HRR domain) with TMP1; the interaction partially mediates the antiangiogenic properties of HRG. Interacts with kappa and lambda light chains of IgG molecules. Interacts with ATP5F1A; the interaction occurs on the surface of T-cells and alters their cell morphology in concert with CONA. Binds IgG molecules containing kappa and lambda light chains and inhibits the formation of insoluble immunoglobulin complexes. Interacts with F12; the interaction, which is enhanced in the presence of zinc ions and inhibited by heparin-binding to HRG, inhibits factor XII autoactivation and contact-initiated coagulation. In terms of processing, N-glycosylated. Post-translationally, proteolytic cleavage produces several HRG fragments which are mostly disulfide-linked and, therefore, not released. On platelet activation, may release a 33 kDa antiangiogenic peptide which encompasses the HRR.

The protein localises to the secreted. Functionally, plasma glycoprotein that binds a number of ligands such as heme, heparin, heparan sulfate, thrombospondin, plasminogen, and divalent metal ions. Inhibits rosette formation. Acts as an adapter protein and implicated in regulating many processes such as immune complex and pathogen clearance, cell adhesion, angiogenesis, coagulation and fibrinolysis. Mediates clearance of necrotic cells through enhancing the phagocytosis of necrotic cells in a heparan sulfate-dependent pathway. This process can be regulated by the presence of certain HRG ligands such as heparin and zinc ions. Binds to IgG subclasses of immunoglobins containing kappa and lambda light chains with different affinities regulating their clearance and inhibiting the formation of insoluble immune complexes. Tethers plasminogen to the cell surface. Binds T-cells and alters the cell morphology. Modulates angiogenesis by blocking the CD6-mediated antiangiongenic effect of thrombospondins, THBS1 and THBS2. This is Histidine-rich glycoprotein (HRG) from Bos taurus (Bovine).